Here is a 195-residue protein sequence, read N- to C-terminus: ATP-dependent Clp protease proteolytic subunit (195 aa).

The active-site Nucleophile is the S98. H123 is a catalytic residue.

It belongs to the peptidase S14 family. Fourteen ClpP subunits assemble into 2 heptameric rings which stack back to back to give a disk-like structure with a central cavity, resembling the structure of eukaryotic proteasomes.

It is found in the cytoplasm. The enzyme catalyses Hydrolysis of proteins to small peptides in the presence of ATP and magnesium. alpha-casein is the usual test substrate. In the absence of ATP, only oligopeptides shorter than five residues are hydrolyzed (such as succinyl-Leu-Tyr-|-NHMec, and Leu-Tyr-Leu-|-Tyr-Trp, in which cleavage of the -Tyr-|-Leu- and -Tyr-|-Trp bonds also occurs).. Functionally, cleaves peptides in various proteins in a process that requires ATP hydrolysis. Has a chymotrypsin-like activity. Plays a major role in the degradation of misfolded proteins. In Helicobacter pylori (strain Shi470), this protein is ATP-dependent Clp protease proteolytic subunit.